We begin with the raw amino-acid sequence, 170 residues long: E1B protein, small T-antigen (170 aa).

It belongs to the adenoviridae E1B 19 kDa protein family.

This Canine adenovirus serotype 2 (CAdV-2) protein is E1B protein, small T-antigen.